The primary structure comprises 86 residues: Small ribosomal subunit protein bS18 (86 aa).

This sequence belongs to the bacterial ribosomal protein bS18 family. As to quaternary structure, part of the 30S ribosomal subunit. Forms a tight heterodimer with protein bS6.

Binds as a heterodimer with protein bS6 to the central domain of the 16S rRNA, where it helps stabilize the platform of the 30S subunit. The chain is Small ribosomal subunit protein bS18 from Campylobacter jejuni subsp. jejuni serotype O:6 (strain 81116 / NCTC 11828).